Consider the following 355-residue polypeptide: Zinc transporter ZIP13 homolog (355 aa).

Asn4 carries an N-linked (GlcNAc...) asparagine glycan. Transmembrane regions (helical) follow at residues 37 to 57 (VFSLLGSVVIGLSGIFPLIII), 79 to 99 (VLLSFAVGGLLGDVFLHLLPE), and 118 to 138 (LWVLSGILIFTIVEKIFSGYA). Asn218 is a glycosylation site (N-linked (GlcNAc...) asparagine). A run of 2 helical transmembrane segments spans residues 273–293 (LLTAGAGLLGALVAIGGSGVT) and 301–321 (SWIMPFTAGGFLHIALVTVLP).

This sequence belongs to the ZIP transporter (TC 2.A.5) family. KE4/Catsup subfamily.

It is found in the basolateral cell membrane. It localises to the golgi apparatus membrane. In terms of biological role, involved in zinc transport and homeostasis. The protein is Zinc transporter ZIP13 homolog (Zip99C) of Drosophila melanogaster (Fruit fly).